The primary structure comprises 213 residues: ATP phosphoribosyltransferase (213 aa).

The protein belongs to the ATP phosphoribosyltransferase family. Short subfamily. As to quaternary structure, heteromultimer composed of HisG and HisZ subunits.

Its subcellular location is the cytoplasm. The enzyme catalyses 1-(5-phospho-beta-D-ribosyl)-ATP + diphosphate = 5-phospho-alpha-D-ribose 1-diphosphate + ATP. It functions in the pathway amino-acid biosynthesis; L-histidine biosynthesis; L-histidine from 5-phospho-alpha-D-ribose 1-diphosphate: step 1/9. In terms of biological role, catalyzes the condensation of ATP and 5-phosphoribose 1-diphosphate to form N'-(5'-phosphoribosyl)-ATP (PR-ATP). Has a crucial role in the pathway because the rate of histidine biosynthesis seems to be controlled primarily by regulation of HisG enzymatic activity. The polypeptide is ATP phosphoribosyltransferase (Listeria monocytogenes serotype 4b (strain F2365)).